We begin with the raw amino-acid sequence, 170 residues long: Large ribosomal subunit protein bL9 (170 aa).

The disordered stretch occupies residues 149–170 (RTEEADAEESAAEEPAVEEAAE). The span at 153–170 (ADAEESAAEEPAVEEAAE) shows a compositional bias: acidic residues.

The protein belongs to the bacterial ribosomal protein bL9 family.

Binds to the 23S rRNA. The chain is Large ribosomal subunit protein bL9 from Oleidesulfovibrio alaskensis (strain ATCC BAA-1058 / DSM 17464 / G20) (Desulfovibrio alaskensis).